The primary structure comprises 250 residues: Lectin 1 (250 aa).

Asn-119 carries an N-linked (GlcNAc...) asparagine; partial glycan. Positions 128 and 130 each coordinate Mn(2+). 4 residues coordinate Ca(2+): Asp-130, Tyr-132, Asn-138, and Asp-141. 2 residues coordinate Mn(2+): Asp-141 and His-146.

The protein belongs to the leguminous lectin family.

Di-N-acetylchitobiose specific lectin. The protein is Lectin 1 of Laburnum alpinum (Scotch laburnum).